We begin with the raw amino-acid sequence, 134 residues long: Replication enhancer protein (134 aa).

The protein belongs to the geminiviridae replication enhancer protein family. As to quaternary structure, homooligomer. Interacts with the replication-associated protein (REP). Interacts with host proliferating cell nuclear antigen (PCNA). Interacts with host retinoblastoma-related protein 1 (RBR1), and may thereby deregulate the host cell cycle. Oligomerization and interaction with PCNA are necessary for optimal replication enhancement.

Increases viral DNA accumulation. Enhances infectivity and symptom expression. This chain is Replication enhancer protein, found in Cynanchum acutum (Little mallow).